The primary structure comprises 271 residues: ATP synthase subunit a (271 aa).

5 consecutive transmembrane segments (helical) span residues 40–60, 100–120, 146–166, 220–240, and 242–262; these read TINI…LVLF, LIAP…LMDL, DVNV…FYSI, LIFI…LNVP, and AIFH…LTIV.

The protein belongs to the ATPase A chain family. In terms of assembly, F-type ATPases have 2 components, CF(1) - the catalytic core - and CF(0) - the membrane proton channel. CF(1) has five subunits: alpha(3), beta(3), gamma(1), delta(1), epsilon(1). CF(0) has three main subunits: a(1), b(2) and c(9-12). The alpha and beta chains form an alternating ring which encloses part of the gamma chain. CF(1) is attached to CF(0) by a central stalk formed by the gamma and epsilon chains, while a peripheral stalk is formed by the delta and b chains.

The protein localises to the cell inner membrane. Functionally, key component of the proton channel; it plays a direct role in the translocation of protons across the membrane. This chain is ATP synthase subunit a, found in Escherichia coli O1:K1 / APEC.